Consider the following 316-residue polypeptide: MTRFQSDAAVSADRGHLMTEQPNPRSTALDLLDTAELVTLFVEEDRRPQQAVADASASISAAVDRIASRLKDGGRLFYLGAGTSGRLGVLDAAECPPTFCSDPEMVQGVLAGGAPALLRSSEGLEDLEAAGREDLDQRGFNAGDCLVGIAAGGTTPYVRGGLSHARSIGALAIAMACVPSDQAPLPCDIDIRLLTGPELLTGSTRLKAGTATKMALNIISTAVMVRLGKVFGNRMVDVSASNSKLVDRCLRILRDLGGIERDDGLVLLDQAGGSVKLALLMASSGLASSEAMELLQTHDGQLRQAFASRGLKLAQS.

The interval 1 to 24 is disordered; that stretch reads MTRFQSDAAVSADRGHLMTEQPNP. An SIS domain is found at 66–229; it reads IASRLKDGGR…STAVMVRLGK (164 aa). The active-site Proton donor is Glu94. Glu125 is a catalytic residue.

Belongs to the GCKR-like family. MurNAc-6-P etherase subfamily. Homodimer.

The enzyme catalyses N-acetyl-D-muramate 6-phosphate + H2O = N-acetyl-D-glucosamine 6-phosphate + (R)-lactate. The protein operates within amino-sugar metabolism; N-acetylmuramate degradation. Functionally, specifically catalyzes the cleavage of the D-lactyl ether substituent of MurNAc 6-phosphate, producing GlcNAc 6-phosphate and D-lactate. The polypeptide is N-acetylmuramic acid 6-phosphate etherase (Parasynechococcus marenigrum (strain WH8102)).